The primary structure comprises 959 residues: Protovillin (959 aa).

Residues 1 to 53 (MEPPLELPTQRKRVIPSKFGILKRNAEIEAEKNRENLQQSSCFSHINEIGKEI) are tail. Residues 54-832 (GLEIWKIIDD…PIMLPTSGVT (779 aa)) form a core region. Gelsolin-like repeat units lie at residues 64-116 (STIQ…SQET), 204-244 (IRVK…LEKG), 309-366 (IKLY…DQRT), 479-529 (RNKF…EDKG), 603-647 (INIH…KEAA), and 713-754 (FKVF…TEKL). 2 consecutive repeat copies span residues 840–849 (TPKPITTPTV) and 851–860 (TPKPITTPTV). Residues 840-860 (TPKPITTPTVTTPKPITTPTV) form a 2 X 10 AA repeats of T-P-K-P-I-T-T-P-T-V region. In terms of domain architecture, HP spans 895-959 (TTITTFYPLS…KQLRVDNGLF (65 aa)).

It belongs to the villin/gelsolin family.

It is found in the cytoplasm. The protein localises to the cytoskeleton. Functionally, caps actin filaments but displays neither severing nor cross-linking nor nucleating activities. Protovillin seems to be a villin precursor with only archaic capping activity. It lacks essential changes in the sequence to allow bundling of actin filaments and consequently the appearance of microvilli. The chain is Protovillin (vilB) from Dictyostelium discoideum (Social amoeba).